A 424-amino-acid polypeptide reads, in one-letter code: Serine--tRNA ligase (424 aa).

An L-serine-binding site is contributed by 230-232 (TAE). 261-263 (RSE) serves as a coordination point for ATP. Glu284 contributes to the L-serine binding site. Residue 348 to 351 (EISS) participates in ATP binding. Ser384 serves as a coordination point for L-serine.

It belongs to the class-II aminoacyl-tRNA synthetase family. Type-1 seryl-tRNA synthetase subfamily. As to quaternary structure, homodimer. The tRNA molecule binds across the dimer.

It localises to the cytoplasm. The enzyme catalyses tRNA(Ser) + L-serine + ATP = L-seryl-tRNA(Ser) + AMP + diphosphate + H(+). It carries out the reaction tRNA(Sec) + L-serine + ATP = L-seryl-tRNA(Sec) + AMP + diphosphate + H(+). It functions in the pathway aminoacyl-tRNA biosynthesis; selenocysteinyl-tRNA(Sec) biosynthesis; L-seryl-tRNA(Sec) from L-serine and tRNA(Sec): step 1/1. In terms of biological role, catalyzes the attachment of serine to tRNA(Ser). Is also able to aminoacylate tRNA(Sec) with serine, to form the misacylated tRNA L-seryl-tRNA(Sec), which will be further converted into selenocysteinyl-tRNA(Sec). This is Serine--tRNA ligase from Streptococcus pneumoniae serotype 4 (strain ATCC BAA-334 / TIGR4).